We begin with the raw amino-acid sequence, 244 residues long: Phosphoadenosine 5'-phosphosulfate reductase (244 aa).

Catalysis depends on cysteine 239, which acts as the Nucleophile; cysteine thiosulfonate intermediate.

Belongs to the PAPS reductase family. CysH subfamily.

Its subcellular location is the cytoplasm. The enzyme catalyses [thioredoxin]-disulfide + sulfite + adenosine 3',5'-bisphosphate + 2 H(+) = [thioredoxin]-dithiol + 3'-phosphoadenylyl sulfate. It functions in the pathway sulfur metabolism; hydrogen sulfide biosynthesis; sulfite from sulfate: step 3/3. Its function is as follows. Catalyzes the formation of sulfite from phosphoadenosine 5'-phosphosulfate (PAPS) using thioredoxin as an electron donor. This is Phosphoadenosine 5'-phosphosulfate reductase from Cronobacter sakazakii (strain ATCC BAA-894) (Enterobacter sakazakii).